The chain runs to 510 residues: Maturase K (510 aa).

The protein belongs to the intron maturase 2 family. MatK subfamily.

It localises to the plastid. It is found in the chloroplast. Functionally, usually encoded in the trnK tRNA gene intron. Probably assists in splicing its own and other chloroplast group II introns. The protein is Maturase K of Grahamia bracteata.